The following is a 236-amino-acid chain: Small ribosomal subunit protein uS2c (236 aa).

This sequence belongs to the universal ribosomal protein uS2 family.

Its subcellular location is the plastid. It is found in the chloroplast. The sequence is that of Small ribosomal subunit protein uS2c (rps2) from Gossypium barbadense (Sea Island cotton).